The primary structure comprises 541 residues: Chaperonin GroEL 2 (541 aa).

ATP is bound by residues 29 to 32 (TLGP), 86 to 90 (DGTTT), Gly-413, 476 to 478 (NAA), and Asp-492.

The protein belongs to the chaperonin (HSP60) family. As to quaternary structure, forms a cylinder of 14 subunits composed of two heptameric rings stacked back-to-back. Interacts with the co-chaperonin GroES.

It is found in the secreted. Its subcellular location is the capsule. The protein localises to the cell surface. It localises to the cell wall. It catalyses the reaction ATP + H2O + a folded polypeptide = ADP + phosphate + an unfolded polypeptide.. Functionally, together with its co-chaperonin GroES, plays an essential role in assisting protein folding. The GroEL-GroES system forms a nano-cage that allows encapsulation of the non-native substrate proteins and provides a physical environment optimized to promote and accelerate protein folding. The protein is Chaperonin GroEL 2 of Mycobacterium ulcerans (strain Agy99).